We begin with the raw amino-acid sequence, 316 residues long: Peroxidase 31 (316 aa).

The first 19 residues, 1–19 (MASLKSLFLLFLFFFTAQS), serve as a signal peptide directing secretion. Cystine bridges form between Cys-30-Cys-111, Cys-63-Cys-68, Cys-117-Cys-312, and Cys-196-Cys-222. The Proton acceptor role is filled by His-61. Residues Asp-62, Gly-67, Asp-69, and Ser-71 each coordinate Ca(2+). A substrate-binding site is contributed by Pro-159. Residue His-189 participates in heme b binding. Ser-190 contacts Ca(2+). The N-linked (GlcNAc...) asparagine glycan is linked to Asn-206. Asp-236, Thr-239, and Asp-244 together coordinate Ca(2+).

It belongs to the peroxidase family. Classical plant (class III) peroxidase subfamily. Heme b serves as cofactor. It depends on Ca(2+) as a cofactor.

Its subcellular location is the secreted. The catalysed reaction is 2 a phenolic donor + H2O2 = 2 a phenolic radical donor + 2 H2O. In terms of biological role, removal of H(2)O(2), oxidation of toxic reductants, biosynthesis and degradation of lignin, suberization, auxin catabolism, response to environmental stresses such as wounding, pathogen attack and oxidative stress. These functions might be dependent on each isozyme/isoform in each plant tissue. This Arabidopsis thaliana (Mouse-ear cress) protein is Peroxidase 31 (PER31).